The sequence spans 371 residues: Peptide chain release factor 2 (371 aa).

An N5-methylglutamine modification is found at Gln252.

This sequence belongs to the prokaryotic/mitochondrial release factor family. In terms of processing, methylated by PrmC. Methylation increases the termination efficiency of RF2.

It localises to the cytoplasm. In terms of biological role, peptide chain release factor 2 directs the termination of translation in response to the peptide chain termination codons UGA and UAA. The polypeptide is Peptide chain release factor 2 (Staphylococcus haemolyticus (strain JCSC1435)).